We begin with the raw amino-acid sequence, 119 residues long: Large ribosomal subunit protein bL20 (119 aa).

Belongs to the bacterial ribosomal protein bL20 family.

In terms of biological role, binds directly to 23S ribosomal RNA and is necessary for the in vitro assembly process of the 50S ribosomal subunit. It is not involved in the protein synthesizing functions of that subunit. This chain is Large ribosomal subunit protein bL20, found in Vesicomyosocius okutanii subsp. Calyptogena okutanii (strain HA).